Reading from the N-terminus, the 179-residue chain is Interleukin-22 (179 aa).

A signal peptide spans 1–33 (MAVLQKSMSFSLMGTLAASCLLLIALWAQEANA). 2 cysteine pairs are disulfide-bonded: Cys-40–Cys-132 and Cys-89–Cys-178. N-linked (GlcNAc...) asparagine glycans are attached at residues Asn-54, Asn-68, and Asn-97.

It belongs to the IL-10 family.

The protein resides in the secreted. Its function is as follows. Cytokine that plays a critical role in modulating tissue responses during inflammation. Plays an essential role in the regeneration of epithelial cells to maintain barrier function after injury and for the prevention of further tissue damage. Unlike most of the cytokines, has no effect on immune cells. Signals through a heterodimeric receptor composed of two subunits, the specific receptor IL22RA1 which is present on non-immune cells in many organs and the shared subunit IL10RB. Ligation of IL22RA1 with IL22 induces activation of the tyrosine kinases JAK1 and TYK2, which in turn activates STAT3. In turn, promotes cell survival and proliferation through STAT3, ERK1/2 and PI3K/AKT pathways. Promotes phosphorylation of GSK3B at 'Ser-9' and CTTN. Promotes epithelial cell spreading. The polypeptide is Interleukin-22 (Il22) (Mus musculus (Mouse)).